The following is a 407-amino-acid chain: Peptidase T (407 aa).

H78 contributes to the Zn(2+) binding site. The active site involves D80. Residue D141 participates in Zn(2+) binding. E175 functions as the Proton acceptor in the catalytic mechanism. Zn(2+)-binding residues include E176, D198, and H380.

This sequence belongs to the peptidase M20B family. Zn(2+) is required as a cofactor.

The protein localises to the cytoplasm. The enzyme catalyses Release of the N-terminal residue from a tripeptide.. Functionally, cleaves the N-terminal amino acid of tripeptides. The protein is Peptidase T of Clostridium novyi (strain NT).